Reading from the N-terminus, the 395-residue chain is Phosphoglycerate kinase (395 aa).

Substrate contacts are provided by residues 20–22 (DFN), Arg-36, 59–62 (HLGR), Arg-120, and Arg-157. ATP contacts are provided by residues Lys-208, Gly-296, Glu-327, and 353–356 (GGDT).

The protein belongs to the phosphoglycerate kinase family. Monomer.

It is found in the cytoplasm. It carries out the reaction (2R)-3-phosphoglycerate + ATP = (2R)-3-phospho-glyceroyl phosphate + ADP. It functions in the pathway carbohydrate degradation; glycolysis; pyruvate from D-glyceraldehyde 3-phosphate: step 2/5. The protein is Phosphoglycerate kinase of Tropheryma whipplei (strain TW08/27) (Whipple's bacillus).